Reading from the N-terminus, the 460-residue chain is tRNA modification GTPase MnmE (460 aa).

Positions 24, 81, and 121 each coordinate (6S)-5-formyl-5,6,7,8-tetrahydrofolate. The 168-residue stretch at 218 to 385 (GMVVAIAGPP…LIAAIEDFAA (168 aa)) folds into the TrmE-type G domain. GTP contacts are provided by residues 228-233 (NVGKST), 247-253 (SPHAGTT), and 272-275 (DTAG). Residues S232 and T253 each coordinate Mg(2+). Residue K460 participates in (6S)-5-formyl-5,6,7,8-tetrahydrofolate binding.

The protein belongs to the TRAFAC class TrmE-Era-EngA-EngB-Septin-like GTPase superfamily. TrmE GTPase family. In terms of assembly, homodimer. Heterotetramer of two MnmE and two MnmG subunits. It depends on K(+) as a cofactor.

It is found in the cytoplasm. Exhibits a very high intrinsic GTPase hydrolysis rate. Involved in the addition of a carboxymethylaminomethyl (cmnm) group at the wobble position (U34) of certain tRNAs, forming tRNA-cmnm(5)s(2)U34. The polypeptide is tRNA modification GTPase MnmE (Rhodopseudomonas palustris (strain BisB5)).